The sequence spans 305 residues: Cytochrome c biogenesis protein CcsA (305 aa).

The next 8 membrane-spanning stretches (helical) occupy residues 11–31 (ANASFALLLITMLIYGMKAIF), 36–56 (ILQLFGTLGILFSNFLVALLL), 75–95 (LMFLCWCFTFFHLLIEKYIQI), 97–117 (FIGFITVPIAMLVNAFATFFL), 142–162 (IMMASYAALILGSLLSIAFLF), 212–232 (TIGIGFPLLTIGIISGAVWAN), 239–259 (WSWDPKETWALITWIIFAIYL), and 273–293 (AIVAFIGFVIVWVCYLGVNLL).

This sequence belongs to the CcmF/CycK/Ccl1/NrfE/CcsA family. As to quaternary structure, may interact with Ccs1.

It is found in the plastid. The protein resides in the chloroplast thylakoid membrane. Its function is as follows. Required during biogenesis of c-type cytochromes (cytochrome c6 and cytochrome f) at the step of heme attachment. This chain is Cytochrome c biogenesis protein CcsA, found in Mesostigma viride (Green alga).